Consider the following 236-residue polypeptide: Small ribosomal subunit protein uS2c (236 aa).

It belongs to the universal ribosomal protein uS2 family.

It localises to the plastid. The protein localises to the chloroplast. The sequence is that of Small ribosomal subunit protein uS2c (rps2) from Pisum sativum (Garden pea).